The following is a 639-amino-acid chain: MDNEKQASPPPAAPPLNWRYLLWIILLGIFLISWLGNAGRQAGDEITYTEFKQALHQGKIAKVTLEGQHISGTYHEAGGNIQPEGKDSKGFSTTRPPFDDPELMKLLEQKGVVVQAKSEEPSLWMQAIIGILPWFLILGLIFYVSYRMQQRMMGGGRGGPFGFGKAPVKRFREGSIGVTFEDVAGVENAKRDLREIVDYLKEPGQFKAVGAKIPKGILLVGRPGTGKTLLARAVAGEAGVPFYSISGSDFIEMFVGVGAARVRDMFKAAKEEAPSILFIDEIDSVGRARGTGLGGGHDEREQTLNQILGEMDGFAAHENVVVLAATNRPDVLDPALLRPGRFDRKVVLDLPDKKARQRVLEVHTKNVPLAADVDLERVARRTVGFSGADLANLVNEAALLTGRERKKEVDMDMFNLARDKIVLGAKRETILGEEEKKLVAYHESGHALTAWLLPEADPLHQVSIIPRGMALGVTEQAPEEERHSLSRAYLLDRLGVMLGGRISEKITFGDVTSGAESDLKQATQLARRMVCQWGMSDKIGAAAFSRSEEHVFLGRELSQPRDFSEQTAQIIDDEIRRILSEVERKTENLLQENRAKLDALAKALIEAETLNLVEVEKIFKNVKELPQEGHNEAVATGAG.

At 1-15 (MDNEKQASPPPAAPP) the chain is on the cytoplasmic side. A helical membrane pass occupies residues 16–36 (LNWRYLLWIILLGIFLISWLG). Residues 37–123 (NAGRQAGDEI…VQAKSEEPSL (87 aa)) lie on the Periplasmic side of the membrane. The helical transmembrane segment at 124 to 144 (WMQAIIGILPWFLILGLIFYV) threads the bilayer. Residues 145 to 639 (SYRMQQRMMG…HNEAVATGAG (495 aa)) are Cytoplasmic-facing. Residue 221-228 (GRPGTGKT) coordinates ATP. His-442 is a Zn(2+) binding site. Glu-443 is a catalytic residue. Residues His-446 and Asp-518 each coordinate Zn(2+).

This sequence in the central section; belongs to the AAA ATPase family. In the C-terminal section; belongs to the peptidase M41 family. Homohexamer. Zn(2+) serves as cofactor.

It localises to the cell inner membrane. Acts as a processive, ATP-dependent zinc metallopeptidase for both cytoplasmic and membrane proteins. Plays a role in the quality control of integral membrane proteins. The chain is ATP-dependent zinc metalloprotease FtsH from Nitrosococcus oceani (strain ATCC 19707 / BCRC 17464 / JCM 30415 / NCIMB 11848 / C-107).